The chain runs to 332 residues: L-lactate dehydrogenase A chain (332 aa).

Residues 29–57 (GAVG…VEDK) and Arg99 each bind NAD(+). Residues Arg106, Asn138, and Arg169 each coordinate substrate. Asn138 is an NAD(+) binding site. The active-site Proton acceptor is His193. Thr248 contacts substrate.

This sequence belongs to the LDH/MDH superfamily. LDH family. Homotetramer.

The protein resides in the cytoplasm. The catalysed reaction is (S)-lactate + NAD(+) = pyruvate + NADH + H(+). The protein operates within fermentation; pyruvate fermentation to lactate; (S)-lactate from pyruvate: step 1/1. Functionally, interconverts simultaneously and stereospecifically pyruvate and lactate with concomitant interconversion of NADH and NAD(+). The chain is L-lactate dehydrogenase A chain (LDHA) from Columba livia (Rock dove).